Consider the following 167-residue polypeptide: Large ribosomal subunit protein uL10 (167 aa).

Belongs to the universal ribosomal protein uL10 family. As to quaternary structure, part of the ribosomal stalk of the 50S ribosomal subunit. The N-terminus interacts with L11 and the large rRNA to form the base of the stalk. The C-terminus forms an elongated spine to which L12 dimers bind in a sequential fashion forming a multimeric L10(L12)X complex.

Forms part of the ribosomal stalk, playing a central role in the interaction of the ribosome with GTP-bound translation factors. This Streptococcus mutans serotype c (strain ATCC 700610 / UA159) protein is Large ribosomal subunit protein uL10.